Reading from the N-terminus, the 157-residue chain is Small ribosomal subunit protein uS7 (157 aa).

Belongs to the universal ribosomal protein uS7 family. In terms of assembly, part of the 30S ribosomal subunit. Contacts proteins S9 and S11.

Functionally, one of the primary rRNA binding proteins, it binds directly to 16S rRNA where it nucleates assembly of the head domain of the 30S subunit. Is located at the subunit interface close to the decoding center, probably blocks exit of the E-site tRNA. This chain is Small ribosomal subunit protein uS7, found in Borrelia duttonii (strain Ly).